A 229-amino-acid chain; its full sequence is Probable endo-1,4-beta-xylanase A (229 aa).

A signal peptide spans 1-18; that stretch reads MVSFKYLFLAASALGALA. N-linked (GlcNAc...) asparagine glycosylation is found at Asn30 and Asn100. The region spanning 41–229 is the GH11 domain; the sequence is AGTPSSTGWN…SSGSSSITVY (189 aa). Catalysis depends on Glu125, which acts as the Nucleophile. Glu216 functions as the Proton donor in the catalytic mechanism.

This sequence belongs to the glycosyl hydrolase 11 (cellulase G) family.

It localises to the secreted. The catalysed reaction is Endohydrolysis of (1-&gt;4)-beta-D-xylosidic linkages in xylans.. Its pathway is glycan degradation; xylan degradation. Its function is as follows. Endo-1,4-beta-xylanase involved in the hydrolysis of xylan, a major structural heterogeneous polysaccharide found in plant biomass representing the second most abundant polysaccharide in the biosphere, after cellulose. The sequence is that of Probable endo-1,4-beta-xylanase A (xlnA) from Aspergillus clavatus (strain ATCC 1007 / CBS 513.65 / DSM 816 / NCTC 3887 / NRRL 1 / QM 1276 / 107).